Reading from the N-terminus, the 269-residue chain is Indole-3-glycerol phosphate synthase (269 aa).

This sequence belongs to the TrpC family.

The enzyme catalyses 1-(2-carboxyphenylamino)-1-deoxy-D-ribulose 5-phosphate + H(+) = (1S,2R)-1-C-(indol-3-yl)glycerol 3-phosphate + CO2 + H2O. The protein operates within amino-acid biosynthesis; L-tryptophan biosynthesis; L-tryptophan from chorismate: step 4/5. This is Indole-3-glycerol phosphate synthase from Rhodococcus jostii (strain RHA1).